The following is a 375-amino-acid chain: Probable G-protein coupled receptor 27 (375 aa).

The Extracellular portion of the chain corresponds to Met1 to Ala23. N-linked (GlcNAc...) asparagine glycosylation is present at Asn3. Residues Thr24–Val44 traverse the membrane as a helical segment. The Cytoplasmic portion of the chain corresponds to Arg45 to Tyr55. A helical transmembrane segment spans residues Leu56–Met76. Topologically, residues Leu77–Leu97 are extracellular. Cys95 and Cys171 are oxidised to a cystine. The helical transmembrane segment at Leu98 to Val118 threads the bilayer. Over Thr119 to Cys139 the chain is Cytoplasmic. The chain crosses the membrane as a helical span at residues Ala140–Leu160. The Extracellular segment spans residues Asp161 to Pro181. Residues Gly182–Leu202 form a helical membrane-spanning segment. Over Arg203–Met285 the chain is Cytoplasmic. The helical transmembrane segment at Phe286–Leu306 threads the bilayer. At Arg307–Leu320 the chain is on the extracellular side. Residues Thr321–Phe341 form a helical membrane-spanning segment. Residues Asn342–Leu375 are Cytoplasmic-facing.

The protein belongs to the G-protein coupled receptor 1 family. As to expression, highly expressed as a 3.0 kb transcript in brain, ovary, testis, heart, prostate and peripheral Leukocytes. Lower levels in pancreas and small intestine. A 2.3 kb transcript was also found in peripheral Leukocytes. In brain regions, detected as a 3.0 kb transcript in all regions tested. Highest levels in the caudate nucleus, putamen, hippocampus and subthalamic nucleus. Lowest level in the cerebellum.

It localises to the cell membrane. In terms of biological role, orphan receptor. Possible candidate for amine-like G-protein coupled receptor. The protein is Probable G-protein coupled receptor 27 (GPR27) of Homo sapiens (Human).